Consider the following 469-residue polypeptide: UDP-N-acetylmuramate--L-alanine ligase (469 aa).

114 to 120 (GTHGKTT) provides a ligand contact to ATP.

It belongs to the MurCDEF family.

Its subcellular location is the cytoplasm. The catalysed reaction is UDP-N-acetyl-alpha-D-muramate + L-alanine + ATP = UDP-N-acetyl-alpha-D-muramoyl-L-alanine + ADP + phosphate + H(+). It functions in the pathway cell wall biogenesis; peptidoglycan biosynthesis. Functionally, cell wall formation. The polypeptide is UDP-N-acetylmuramate--L-alanine ligase (Sinorhizobium fredii (strain NBRC 101917 / NGR234)).